The chain runs to 297 residues: Heterogeneous nuclear ribonucleoprotein D-like (297 aa).

The disordered stretch occupies residues 1–21; the sequence is MTGFGATPDFNEGSKINASKN. RRM domains are found at residues 26–108 and 111–190; these read GKMF…KGKE and KKVF…QPKE. Residues 192-224 form a disordered region; sequence YRQQQQKQQKGGRGAATGRGGARGRGRGQGWNQ. Residues 202–222 show a composition bias toward gly residues; the sequence is GGRGAATGRGGARGRGRGQGW.

The protein resides in the nucleus. It is found in the cytoplasm. In terms of biological role, acts as a transcriptional regulator. Binds DNA and RNA. In Xenopus tropicalis (Western clawed frog), this protein is Heterogeneous nuclear ribonucleoprotein D-like (hnrnpdl).